The chain runs to 205 residues: GTP cyclohydrolase-2 (205 aa).

49–53 is a GTP binding site; sequence RIHSE. Zn(2+) is bound by residues Cys-54, Cys-65, and Cys-67. GTP is bound by residues Gln-70, 92-94, and Thr-114; that span reads EGR. Asp-126 acts as the Proton acceptor in catalysis. Arg-128 (nucleophile) is an active-site residue. Thr-149 and Lys-154 together coordinate GTP.

This sequence belongs to the GTP cyclohydrolase II family. Zn(2+) is required as a cofactor.

The enzyme catalyses GTP + 4 H2O = 2,5-diamino-6-hydroxy-4-(5-phosphoribosylamino)-pyrimidine + formate + 2 phosphate + 3 H(+). The protein operates within cofactor biosynthesis; riboflavin biosynthesis; 5-amino-6-(D-ribitylamino)uracil from GTP: step 1/4. Catalyzes the conversion of GTP to 2,5-diamino-6-ribosylamino-4(3H)-pyrimidinone 5'-phosphate (DARP), formate and pyrophosphate. This chain is GTP cyclohydrolase-2, found in Shewanella woodyi (strain ATCC 51908 / MS32).